A 273-amino-acid chain; its full sequence is MDRNILRSAREDPHRTATDIQMIISSPNEPVPSKRTVRRRLQQAGLHGRKPVKKPFISKKNRMARVAWAKAHLRWGRQEWAKHIWSDESKFNLFGSDGNSWVRRPVGSRYSPKYQCPTVKHGGGSVMVWGCFTSTSMGPLRRIQSIMDRFQYENIFETTMRPWALQNVGRGFVFQQDNDPKHTSLHVRSWFQRRHVHLLDWPSQSPDLNPIEHLWEELERRLGGIRASNADAKFNQLENAWKAIPMSVIHKLIDSMPRRCQAVIDANGYATKY.

It belongs to the transposase 5 family.

It localises to the nucleus. Its function is as follows. Probably essential for transposable element Tc1 transposition. The insertion of Tc1 is the main cause of spontaneous mutations. It is an endonuclease which can produce a single strand nick at the 5'-end of the transposon. The polypeptide is Transposable element Tc1 transposase (tc1a) (Caenorhabditis elegans).